A 93-amino-acid polypeptide reads, in one-letter code: Class II hydrophobin 1 (93 aa).

Positions 1–16 (MKFFAVAALFVASAMA) are cleaved as a signal peptide. 4 cysteine pairs are disulfide-bonded: cysteine 24/cysteine 74, cysteine 35/cysteine 65, cysteine 36/cysteine 48, and cysteine 75/cysteine 86.

Belongs to the cerato-ulmin hydrophobin family. Interacts with maize ubiquilin 1-like (UBL) protein. Homotetramer. Further self-assembles to form highly ordered films at water-air interfaces through intermolecular interactions.

The protein resides in the cell membrane. Functionally, aerial growth, conidiation, and dispersal of filamentous fungi in the environment rely upon a capability of their secreting small amphipathic proteins called hydrophobins (HPBs) with low sequence identity. Class I can self-assemble into an outermost layer of rodlet bundles on aerial cell surfaces, conferring cellular hydrophobicity that supports fungal growth, development and dispersal; whereas Class II form highly ordered films at water-air interfaces through intermolecular interactions but contribute nothing to the rodlet structure. Hyd1 is a class II hydrophobin that acts as an elicitor of induced systemic resistance (ISR) in plants. During interaction with the plant, binds with the maize target protein UBL in order to recruit more UBL proteins in maize roots to elicit plant defense responses, including cell death as well as brassinosteroid, jasmonate (JA) and ethylene (ET) signaling. The polypeptide is Class II hydrophobin 1 (Trichoderma harzianum (Hypocrea lixii)).